The sequence spans 158 residues: NADH-quinone oxidoreductase subunit B 2 (158 aa).

Residues Cys-37, Cys-38, Cys-102, and Cys-132 each coordinate [4Fe-4S] cluster.

The protein belongs to the complex I 20 kDa subunit family. As to quaternary structure, NDH-1 is composed of 14 different subunits. Subunits NuoB, C, D, E, F, and G constitute the peripheral sector of the complex. [4Fe-4S] cluster is required as a cofactor.

It localises to the cell inner membrane. The enzyme catalyses a quinone + NADH + 5 H(+)(in) = a quinol + NAD(+) + 4 H(+)(out). Its function is as follows. NDH-1 shuttles electrons from NADH, via FMN and iron-sulfur (Fe-S) centers, to quinones in the respiratory chain. Couples the redox reaction to proton translocation (for every two electrons transferred, four hydrogen ions are translocated across the cytoplasmic membrane), and thus conserves the redox energy in a proton gradient. This chain is NADH-quinone oxidoreductase subunit B 2, found in Acidithiobacillus ferrooxidans (strain ATCC 53993 / BNL-5-31) (Leptospirillum ferrooxidans (ATCC 53993)).